Reading from the N-terminus, the 411-residue chain is Histone-lysine N-methyltransferase SUV39H1-A (411 aa).

Residues 43–101 form the Chromo domain; that stretch reads YEVEYLCNYKKHKGREFFLVKWKGYEESENTWEPLKNLKCPILLHQFRKDMKAALLQAN. The Pre-SET domain occupies 178–239; sequence VGCECEDCVS…DCANRVVQRG (62 aa). Residues Cys-180, Cys-182, Cys-185, Cys-193, Cys-194, Cys-221, Cys-225, Cys-227, and Cys-231 each coordinate Zn(2+). One can recognise an SET domain in the interval 242-365; the sequence is YDLCIFKTDN…AGEELTFDYK (124 aa). Residues 253-255, Tyr-296, and 322-323 contribute to the S-adenosyl-L-methionine site; these read RGW and NH. Residues Cys-325, Cys-399, Cys-401, and Cys-406 each contribute to the Zn(2+) site. A Post-SET domain is found at 395–411; the sequence is VHMECKCGVRNCRKYLF.

This sequence belongs to the class V-like SAM-binding methyltransferase superfamily. Histone-lysine methyltransferase family. Suvar3-9 subfamily. In terms of tissue distribution, expressed ubuitiously.

It localises to the nucleus. The protein localises to the chromosome. The protein resides in the centromere. It carries out the reaction N(6)-methyl-L-lysyl(9)-[histone H3] + S-adenosyl-L-methionine = N(6),N(6)-dimethyl-L-lysyl(9)-[histone H3] + S-adenosyl-L-homocysteine + H(+). The catalysed reaction is N(6),N(6)-dimethyl-L-lysyl(9)-[histone H3] + S-adenosyl-L-methionine = N(6),N(6),N(6)-trimethyl-L-lysyl(9)-[histone H3] + S-adenosyl-L-homocysteine + H(+). Histone methyltransferase that specifically trimethylates 'Lys-9' of histone H3 using monomethylated H3 'Lys-9' as substrate. H3 'Lys-9' trimethylation represents a specific tag for epigenetic transcriptional repression by recruiting HP1 (CBX1, CBX3 and/or CBX5) proteins to methylated histones. Mainly functions in heterochromatin regions, thereby playing a central role in the establishment of constitutive heterochromatin at pericentric and telomere regions. H3 'Lys-9' trimethylation is also required to direct DNA methylation at pericentric repeats. SUV39H1 is targeted to histone H3 via its interaction with RB1 and is involved in many processes, such as regulation of organ-specific terminal differentiation during development. This is Histone-lysine N-methyltransferase SUV39H1-A (suv39h1a) from Danio rerio (Zebrafish).